A 202-amino-acid polypeptide reads, in one-letter code: Ribonuclease HII (202 aa).

One can recognise an RNase H type-2 domain in the interval 1 to 195 (MIVAGVDEVG…PELKGGSPAG (195 aa)). Aspartate 7, glutamate 8, and aspartate 103 together coordinate a divalent metal cation.

The protein belongs to the RNase HII family. Mn(2+) serves as cofactor. Mg(2+) is required as a cofactor.

The protein localises to the cytoplasm. It carries out the reaction Endonucleolytic cleavage to 5'-phosphomonoester.. Endonuclease that specifically degrades the RNA of RNA-DNA hybrids. In Synechococcus sp. (strain RCC307), this protein is Ribonuclease HII.